The following is a 130-amino-acid chain: Small ribosomal subunit protein uS11c (130 aa).

It belongs to the universal ribosomal protein uS11 family. In terms of assembly, part of the 30S ribosomal subunit.

It localises to the plastid. It is found in the chloroplast. This chain is Small ribosomal subunit protein uS11c, found in Cycas taitungensis (Prince sago).